The following is a 289-amino-acid chain: Tachykinins (289 aa).

Residues 1–24 (MRPLSGLIALALLLLLLLTAPSSA) form the signal peptide. The tract at residues 24–94 (AADTETESSG…DEEADSSYAE (71 aa)) is disordered. Residues 25-47 (ADTETESSGSPLTPGAEEPRRVV) constitute a propeptide that is removed on maturation. R59 bears the Arginine amide mark. Positions 60-69 (GKKDEEHDTS) are enriched in basic and acidic residues. N95 carries the post-translational modification Asparagine amide. R110 carries the post-translational modification Arginine amide. Residue V153 is modified to Valine amide. Arginine amide is present on residues R165, R200, R239, and R281. The propeptide occupies 285–289 (PALFE).

This sequence belongs to the tachykinin family. In terms of tissue distribution, strong expression is seen in a group of 14 cells plus one isolated cell in the midgut of stage 17 embryos. Also expressed in a pair of medially located unidentified cells, just posterior to the brain, and in two lateral groups of cells that may be associated with tracheae. Expression in the larval gut is restricted to cells with endocrine cell-like morphology in the posterior midgut, just anterior to the malphigian tubules. In the brain, expression is detected in a restricted number of neuronal cell bodies. Expression in the adult female gut is restricted to the midgut with no expression detected in the hindgut.

The protein localises to the secreted. Functionally, tachykinins are active peptides which excite neurons, evoke behavioral responses, are potent vasodilators and secretagogues, and contract (directly or indirectly) many smooth muscles. Stimulates gut muscle contractions. Required for the response to the male sex pheromone CH503 which is transferred from males to females during mating and inhibits courtship behavior by other males. The Gr68a gustatory receptor is required for detection of the pheromone and Gr68a-expressing neurons in the male foreleg relay signals to the suboesophageal zone (SEZ) which leads to courtship suppression through release of tachykinin from a cluster of 8-10 neurons in the SEZ. The chain is Tachykinins from Drosophila melanogaster (Fruit fly).